A 248-amino-acid polypeptide reads, in one-letter code: Triosephosphate isomerase (248 aa).

9-11 (NWK) is a binding site for substrate. The active-site Electrophile is histidine 94. Glutamate 166 functions as the Proton acceptor in the catalytic mechanism. Residues glycine 172, serine 212, and 233-234 (GG) contribute to the substrate site.

The protein belongs to the triosephosphate isomerase family. Homodimer.

It localises to the cytoplasm. It catalyses the reaction D-glyceraldehyde 3-phosphate = dihydroxyacetone phosphate. The protein operates within carbohydrate biosynthesis; gluconeogenesis. It participates in carbohydrate degradation; glycolysis; D-glyceraldehyde 3-phosphate from glycerone phosphate: step 1/1. Functionally, involved in the gluconeogenesis. Catalyzes stereospecifically the conversion of dihydroxyacetone phosphate (DHAP) to D-glyceraldehyde-3-phosphate (G3P). The polypeptide is Triosephosphate isomerase (Clostridium acetobutylicum (strain ATCC 824 / DSM 792 / JCM 1419 / IAM 19013 / LMG 5710 / NBRC 13948 / NRRL B-527 / VKM B-1787 / 2291 / W)).